Consider the following 356-residue polypeptide: 3-dehydroquinate synthase (356 aa).

NAD(+) contacts are provided by residues 106 to 110 (GVVGD), 130 to 131 (TT), Lys-143, and Lys-152. Zn(2+) contacts are provided by Glu-185, His-248, and His-265.

It belongs to the sugar phosphate cyclases superfamily. Dehydroquinate synthase family. It depends on Co(2+) as a cofactor. Requires Zn(2+) as cofactor. NAD(+) is required as a cofactor.

The protein localises to the cytoplasm. It catalyses the reaction 7-phospho-2-dehydro-3-deoxy-D-arabino-heptonate = 3-dehydroquinate + phosphate. The protein operates within metabolic intermediate biosynthesis; chorismate biosynthesis; chorismate from D-erythrose 4-phosphate and phosphoenolpyruvate: step 2/7. Catalyzes the conversion of 3-deoxy-D-arabino-heptulosonate 7-phosphate (DAHP) to dehydroquinate (DHQ). This chain is 3-dehydroquinate synthase, found in Thermoanaerobacter pseudethanolicus (strain ATCC 33223 / 39E) (Clostridium thermohydrosulfuricum).